A 247-amino-acid polypeptide reads, in one-letter code: tRNA pseudouridine synthase A (247 aa).

The active-site Nucleophile is D53. A substrate-binding site is contributed by Y111.

The protein belongs to the tRNA pseudouridine synthase TruA family. Homodimer.

It carries out the reaction uridine(38/39/40) in tRNA = pseudouridine(38/39/40) in tRNA. Its function is as follows. Formation of pseudouridine at positions 38, 39 and 40 in the anticodon stem and loop of transfer RNAs. This is tRNA pseudouridine synthase A from Bacillus subtilis (strain 168).